The primary structure comprises 167 residues: Ion-translocating oxidoreductase complex subunit B (167 aa).

A hydrophobic region spans residues Met1–Ala22. The 60-residue stretch at Gln28–Ile87 folds into the 4Fe-4S domain. [4Fe-4S] cluster-binding residues include Cys45, Cys48, Cys53, Cys70, Cys113, Cys116, Cys119, Cys123, Cys143, Cys146, Cys149, and Cys153. 4Fe-4S ferredoxin-type domains lie at Asn104–Asn133 and Phe134–Glu163.

The protein belongs to the 4Fe4S bacterial-type ferredoxin family. RnfB subfamily. As to quaternary structure, the complex is composed of six subunits: RnfA, RnfB, RnfC, RnfD, RnfE and RnfG. [4Fe-4S] cluster serves as cofactor.

The protein resides in the cell inner membrane. Functionally, part of a membrane-bound complex that couples electron transfer with translocation of ions across the membrane. This Buchnera aphidicola subsp. Acyrthosiphon pisum (strain 5A) protein is Ion-translocating oxidoreductase complex subunit B.